The following is a 342-amino-acid chain: Phosphate acyltransferase (342 aa).

Belongs to the PlsX family. Homodimer. Probably interacts with PlsY.

It is found in the cytoplasm. It catalyses the reaction a fatty acyl-[ACP] + phosphate = an acyl phosphate + holo-[ACP]. The protein operates within lipid metabolism; phospholipid metabolism. Catalyzes the reversible formation of acyl-phosphate (acyl-PO(4)) from acyl-[acyl-carrier-protein] (acyl-ACP). This enzyme utilizes acyl-ACP as fatty acyl donor, but not acyl-CoA. In Shewanella woodyi (strain ATCC 51908 / MS32), this protein is Phosphate acyltransferase.